Consider the following 423-residue polypeptide: Serine--tRNA ligase (423 aa).

231-233 (TAE) contributes to the L-serine binding site. 262 to 264 (RSE) is a binding site for ATP. E285 contributes to the L-serine binding site. 349-352 (EISS) serves as a coordination point for ATP. An L-serine-binding site is contributed by S384.

Belongs to the class-II aminoacyl-tRNA synthetase family. Type-1 seryl-tRNA synthetase subfamily. In terms of assembly, homodimer. The tRNA molecule binds across the dimer.

Its subcellular location is the cytoplasm. The enzyme catalyses tRNA(Ser) + L-serine + ATP = L-seryl-tRNA(Ser) + AMP + diphosphate + H(+). The catalysed reaction is tRNA(Sec) + L-serine + ATP = L-seryl-tRNA(Sec) + AMP + diphosphate + H(+). The protein operates within aminoacyl-tRNA biosynthesis; selenocysteinyl-tRNA(Sec) biosynthesis; L-seryl-tRNA(Sec) from L-serine and tRNA(Sec): step 1/1. Catalyzes the attachment of serine to tRNA(Ser). Is also able to aminoacylate tRNA(Sec) with serine, to form the misacylated tRNA L-seryl-tRNA(Sec), which will be further converted into selenocysteinyl-tRNA(Sec). The polypeptide is Serine--tRNA ligase (Lactococcus lactis subsp. lactis (strain IL1403) (Streptococcus lactis)).